The following is a 144-amino-acid chain: Large ribosomal subunit protein uL15 (144 aa).

Over residues 1 to 12 (MRLNTLSPSLGS) the composition is skewed to polar residues. The segment at 1-51 (MRLNTLSPSLGSRKNHKRLGRGIGSGFGKTAGRGHKGQKSRSGGHVNRGFE) is disordered. Over residues 21–31 (RGIGSGFGKTA) the composition is skewed to gly residues.

Belongs to the universal ribosomal protein uL15 family. As to quaternary structure, part of the 50S ribosomal subunit.

Functionally, binds to the 23S rRNA. The protein is Large ribosomal subunit protein uL15 of Buchnera aphidicola subsp. Schizaphis graminum (strain Sg).